The sequence spans 170 residues: Small ribosomal subunit protein uS3mB (170 aa).

The transit peptide at 1 to 30 directs the protein to the mitochondrion; it reads MAAPVMSAFGRLQGLIRTERSLLTHVQSRC.

It belongs to the universal ribosomal protein uS3 family. As to quaternary structure, component of the mitochondrial ribosome small subunit (28S) which comprises a 12S rRNA and about 30 distinct proteins.

The protein resides in the mitochondrion. The protein is Small ribosomal subunit protein uS3mB (mrps24-b) of Xenopus laevis (African clawed frog).